Consider the following 354-residue polypeptide: Protein Wnt-11 (354 aa).

A signal peptide spans 1–24 (MRARPQVCEALLFALALHTGVCYG). 2 N-linked (GlcNAc...) asparagine glycosylation sites follow: Asn40 and Asn90. Intrachain disulfides connect Cys80-Cys91, Cys130-Cys138, and Cys140-Cys157. Residue Asn160 is glycosylated (N-linked (GlcNAc...) asparagine). 8 disulfides stabilise this stretch: Cys209-Cys223, Cys211-Cys218, Cys283-Cys314, Cys299-Cys309, Cys313-Cys353, Cys329-Cys344, Cys331-Cys341, and Cys336-Cys337. Residue Ser215 is the site of O-palmitoleoyl serine; by PORCN attachment. N-linked (GlcNAc...) asparagine glycosylation is found at Asn300 and Asn304.

Belongs to the Wnt family. In terms of processing, palmitoleoylation is required for efficient binding to frizzled receptors. Depalmitoleoylation leads to Wnt signaling pathway inhibition.

The protein localises to the secreted. It localises to the extracellular space. The protein resides in the extracellular matrix. In terms of biological role, ligand for members of the frizzled family of seven transmembrane receptors. Probable developmental protein. May be a signaling molecule which affects the development of discrete regions of tissues. Is likely to signal over only few cell diameters. The polypeptide is Protein Wnt-11 (Wnt11) (Mus musculus (Mouse)).